The primary structure comprises 307 residues: UDP-N-acetylenolpyruvoylglucosamine reductase (307 aa).

The region spanning 29–197 is the FAD-binding PCMH-type domain; the sequence is RVGGPAEWFA…LSARFRLDPG (169 aa). R176 is a catalytic residue. S227 functions as the Proton donor in the catalytic mechanism. Residue E297 is part of the active site.

This sequence belongs to the MurB family. FAD serves as cofactor.

The protein resides in the cytoplasm. It catalyses the reaction UDP-N-acetyl-alpha-D-muramate + NADP(+) = UDP-N-acetyl-3-O-(1-carboxyvinyl)-alpha-D-glucosamine + NADPH + H(+). It participates in cell wall biogenesis; peptidoglycan biosynthesis. Cell wall formation. In Prochlorococcus marinus (strain MIT 9313), this protein is UDP-N-acetylenolpyruvoylglucosamine reductase.